The primary structure comprises 278 residues: Cell division protein FtsQ (278 aa).

Residues 1–6 (MNATLR) are Cytoplasmic-facing. The helical transmembrane segment at 7–27 (ILAWLIAVALVALPVVAVLNG) threads the bilayer. Residues 28 to 278 (WVGAERWPLA…SPFAIPGFKT (251 aa)) are Periplasmic-facing. One can recognise a POTRA domain in the interval 34–103 (WPLARLRVSG…DVLEVHVVEH (70 aa)).

It belongs to the FtsQ/DivIB family. FtsQ subfamily. In terms of assembly, part of a complex composed of FtsB, FtsL and FtsQ.

The protein localises to the cell inner membrane. Essential cell division protein. May link together the upstream cell division proteins, which are predominantly cytoplasmic, with the downstream cell division proteins, which are predominantly periplasmic. May control correct divisome assembly. The protein is Cell division protein FtsQ of Xanthomonas campestris pv. campestris (strain ATCC 33913 / DSM 3586 / NCPPB 528 / LMG 568 / P 25).